The primary structure comprises 92 residues: Alpha-elapitoxin-As2a (92 aa).

An N-terminal signal peptide occupies residues 1 to 21 (MKTLLLTLVVVTIVCLDLGDG). Disulfide bonds link C24–C41, C34–C62, C47–C51, C66–C77, and C78–C83.

Belongs to the three-finger toxin family. Long-chain subfamily. Type II alpha-neurotoxin sub-subfamily. In terms of tissue distribution, expressed by the venom gland.

It is found in the secreted. Binds with high affinity to muscular (alpha-1/CHRNA1) and neuronal (alpha-7/CHRNA7) nicotinic acetylcholine receptor (nAChR) and inhibits acetylcholine from binding to the receptor, thereby impairing neuromuscular and neuronal transmission. The chain is Alpha-elapitoxin-As2a from Austrelaps superbus (Lowland copperhead snake).